The primary structure comprises 104 residues: NADH-quinone oxidoreductase subunit K (104 aa).

The next 3 membrane-spanning stretches (helical) occupy residues 7-27, 33-53, and 67-87; these read LSHY…GIFL, IVIL…LVSF, and LLVL…LVVF.

It belongs to the complex I subunit 4L family. In terms of assembly, NDH-1 is composed of 14 different subunits. Subunits NuoA, H, J, K, L, M, N constitute the membrane sector of the complex.

The protein localises to the cell inner membrane. The enzyme catalyses a quinone + NADH + 5 H(+)(in) = a quinol + NAD(+) + 4 H(+)(out). Functionally, NDH-1 shuttles electrons from NADH, via FMN and iron-sulfur (Fe-S) centers, to quinones in the respiratory chain. The immediate electron acceptor for the enzyme in this species is believed to be ubiquinone. Couples the redox reaction to proton translocation (for every two electrons transferred, four hydrogen ions are translocated across the cytoplasmic membrane), and thus conserves the redox energy in a proton gradient. This chain is NADH-quinone oxidoreductase subunit K, found in Xanthobacter autotrophicus (strain ATCC BAA-1158 / Py2).